The following is a 537-amino-acid chain: Probable quinate permease (537 aa).

Topologically, residues 1 to 22 are cytoplasmic; the sequence is MSILSLVEDRPTPKEVYNWKIY. A helical transmembrane segment spans residues 23–43; it reads LLAAVASCTSCMIGYDSAFIG. Residues 44–74 are Extracellular-facing; sequence TTISLQSFKDEFDWDSMSAAHQDLVSSNIVS. Residues 75 to 95 traverse the membrane as a helical segment; it reads LYQAGAFFGAFFAYPIGHFWG. Residues 96-97 lie on the Cytoplasmic side of the membrane; that stretch reads RK. The helical transmembrane segment at 98–118 threads the bilayer; that stretch reads WGLMVSALIFTLGAGIMLGTN. Topologically, residues 119–130 are extracellular; that stretch reads GDRGFGLLYGGR. Residues 131-151 traverse the membrane as a helical segment; that stretch reads VLAGLGVGAGSNITPIYISEL. Residues 152 to 159 lie on the Cytoplasmic side of the membrane; sequence SPPAIRGR. A helical membrane pass occupies residues 160–180; the sequence is LVGVYELGWQIGGLVGFWICY. Residues 181–193 are Extracellular-facing; sequence GVDETLPPSHKQW. The helical transmembrane segment at 194-214 threads the bilayer; sequence IIPFAVQLIPSGLLIIGALFL. Residues 215-285 lie on the Cytoplasmic side of the membrane; it reads KESPRWLFLR…AWTNKKILYR (71 aa). The chain crosses the membrane as a helical span at residues 286 to 306; it reads LFLGSMLFFWQNGSGINAINY. At 307 to 325 the chain is on the extracellular side; sequence YSPTVFKSIGVTGSNTSLF. The helical transmembrane segment at 326–346 threads the bilayer; that stretch reads TTGIFGVVKTVVTFIWLLWLI. At 347–352 the chain is on the cytoplasmic side; sequence DRVGRR. A helical membrane pass occupies residues 353–373; sequence LLLLIGAAGGSICLWIVGAYI. Residues 374 to 387 lie on the Extracellular side of the membrane; it reads KIARPSERENKQMD. A helical membrane pass occupies residues 388 to 408; sequence GGGIAAMFFFYLWTVFYTPSW. Topologically, residues 409 to 456 are cytoplasmic; that stretch reads NGTPWVINSEMFDPNIRSLAQACAAGSNWLWNFLISRFTPQMFAKMDY. Residues 457 to 477 form a helical membrane-spanning segment; it reads GVYFFFASLMILSIIFVFFLI. Topologically, residues 478 to 537 are extracellular; the sequence is PETKGIPLESMDRLFETQPIWRAHGTLLKQIREDEERFRHDLEDSGFVKSTDRQVEVVDA.

The protein belongs to the major facilitator superfamily. Sugar transporter (TC 2.A.1.1) family. Interacts with creB. Ubiquitinated. Deubiquitinated by creB, probably to control its activity or amount.

It is found in the cell membrane. Integral membrane transporter that imports quinic acid to be catabolized as a carbon source. This is Probable quinate permease (qutD) from Aspergillus flavus (strain ATCC 200026 / FGSC A1120 / IAM 13836 / NRRL 3357 / JCM 12722 / SRRC 167).